A 114-amino-acid polypeptide reads, in one-letter code: Non-specific lipid-transfer protein 1 (114 aa).

Residues 1 to 23 (MEMVSKIACFVLLCMVVVAPHAE) form the signal peptide. Cystine bridges form between C27-C73, C37-C50, C51-C96, and C71-C110.

This sequence belongs to the plant LTP family.

Plant non-specific lipid-transfer proteins transfer phospholipids as well as galactolipids across membranes. May play a role in wax or cutin deposition in the cell walls of expanding epidermal cells and certain secretory tissues. The sequence is that of Non-specific lipid-transfer protein 1 (TSW12) from Solanum lycopersicum (Tomato).